The following is a 381-amino-acid chain: Dynactin subunit 2 (381 aa).

A disordered region spans residues 15–39; that stretch reads DQPDVYETPDAPESETSDFYDEEPA. Residues 24–39 are compositionally biased toward acidic residues; sequence DAPESETSDFYDEEPA. Coiled-coil stretches lie at residues 100-216 and 350-381; these read QKCL…AVGA and GVQE…EKVK.

The protein belongs to the dynactin subunit 2 family. In terms of assembly, subunit of dynactin, a multiprotein complex associated with dynein.

Its subcellular location is the cytoplasm. The protein resides in the cytoskeleton. The protein localises to the membrane. Modulates cytoplasmic dynein binding to an organelle, and plays a role in prometaphase chromosome alignment and spindle organization during mitosis. In Aedes aegypti (Yellowfever mosquito), this protein is Dynactin subunit 2.